Consider the following 88-residue polypeptide: Small ribosomal subunit protein uS15 (88 aa).

Belongs to the universal ribosomal protein uS15 family. As to quaternary structure, part of the 30S ribosomal subunit. Forms a bridge to the 50S subunit in the 70S ribosome, contacting the 23S rRNA.

Functionally, one of the primary rRNA binding proteins, it binds directly to 16S rRNA where it helps nucleate assembly of the platform of the 30S subunit by binding and bridging several RNA helices of the 16S rRNA. In terms of biological role, forms an intersubunit bridge (bridge B4) with the 23S rRNA of the 50S subunit in the ribosome. The sequence is that of Small ribosomal subunit protein uS15 from Leptospira biflexa serovar Patoc (strain Patoc 1 / Ames).